The sequence spans 181 residues: MPRSGRLVLVVGPSGAGKDTVLREARRRLGHAPDIVFPRRVITRPPDPAEDHEPVSDDEFQRRAFALSWSAHGLSYGIPASIVGDLDAGRIVVVNVSRAIVADARRRFPCFVVAVTAAPAILAARLAVRRRETAAEIGARLARAAAPVEADAVVANETTPEAAGAAFLGILLRCRDLPCLP.

12–19 lines the ATP pocket; sequence GPSGAGKD.

Belongs to the ribose 1,5-bisphosphokinase family.

The catalysed reaction is alpha-D-ribose 1,5-bisphosphate + ATP = 5-phospho-alpha-D-ribose 1-diphosphate + ADP. The protein operates within metabolic intermediate biosynthesis; 5-phospho-alpha-D-ribose 1-diphosphate biosynthesis; 5-phospho-alpha-D-ribose 1-diphosphate from D-ribose 5-phosphate (route II): step 3/3. Its function is as follows. Catalyzes the phosphorylation of ribose 1,5-bisphosphate to 5-phospho-D-ribosyl alpha-1-diphosphate (PRPP). In Acidiphilium cryptum (strain JF-5), this protein is Ribose 1,5-bisphosphate phosphokinase PhnN.